We begin with the raw amino-acid sequence, 407 residues long: Peptidase T (407 aa).

His81 provides a ligand contact to Zn(2+). Asp83 is a catalytic residue. Zn(2+) is bound at residue Asp142. The active-site Proton acceptor is Glu176. Residues Glu177, Asp199, and His381 each contribute to the Zn(2+) site.

This sequence belongs to the peptidase M20B family. Zn(2+) is required as a cofactor.

It localises to the cytoplasm. The catalysed reaction is Release of the N-terminal residue from a tripeptide.. Functionally, cleaves the N-terminal amino acid of tripeptides. The chain is Peptidase T from Streptococcus pneumoniae (strain Taiwan19F-14).